A 508-amino-acid polypeptide reads, in one-letter code: PTS system mannitol-specific EIICB component (508 aa).

Topologically, residues 1 to 30 are cytoplasmic; sequence MSQTETQENKGLGRKVQAFGSFLSSMIMPN. Positions 19-351 constitute a PTS EIIC type-2 domain; the sequence is FGSFLSSMIM…LKFTKEPEED (333 aa). The helical transmembrane segment at 31–52 threads the bilayer; that stretch reads IGAFIAWGFIAAIFIDGGWWPN. The Extracellular segment spans residues 53–56; the sequence is KDLS. A helical membrane pass occupies residues 57 to 77; that stretch reads ELAGPMISYLIPLLIAYSGGR. At 78–141 the chain is on the cytoplasmic side; that stretch reads LIHEMRGGII…QGFEMLFNNF (64 aa). Residues 142 to 163 form a helical membrane-spanning segment; the sequence is SAGILGFIMTIVGFKILAPIME. The Extracellular segment spans residues 164–172; the sequence is FIMHILSLA. Residues 173–193 form a helical membrane-spanning segment; sequence VEALVHAHLLPLVSIIVEPAK. Over 194–280 the chain is Cytoplasmic; sequence IVFLNNAINH…VLMRPLLFIA (87 aa). A helical transmembrane segment spans residues 281–300; sequence VILGGMTGVATYSLLDFGFK. Over 301 to 320 the chain is Extracellular; it reads SPASPGSFIVYMLNAPKGEF. Residues 321-342 traverse the membrane as a helical segment; sequence LHMVLGVLLAAIVSFIVAALIL. Over 343 to 508 the chain is Cytoplasmic; the sequence is KFTKEPEEDL…RYDELLENLK (166 aa). The disordered stretch occupies residues 355–400; sequence ATEKMEASKGKKSSVSSKLKGNEDNNATSTTASTSTSENNEEQSEE. Residues 367 to 392 show a composition bias toward low complexity; that stretch reads SSVSSKLKGNEDNNATSTTASTSTSE. The 89-residue stretch at 420 to 508 folds into the PTS EIIB type-2 domain; sequence NHVIFACDAG…RYDELLENLK (89 aa). The Phosphocysteine intermediate; for EIIB activity role is filled by C426. Residue C426 is modified to Phosphocysteine; by EIIA.

Homodimer.

The protein resides in the cell membrane. It catalyses the reaction D-mannitol(out) + N(pros)-phospho-L-histidyl-[protein] = D-mannitol 1-phosphate(in) + L-histidyl-[protein]. Its function is as follows. The phosphoenolpyruvate-dependent sugar phosphotransferase system (sugar PTS), a major carbohydrate active transport system, catalyzes the phosphorylation of incoming sugar substrates concomitantly with their translocation across the cell membrane. The enzyme II CmtAB PTS system is involved in D-mannitol transport. This chain is PTS system mannitol-specific EIICB component (mtlA), found in Staphylococcus saprophyticus subsp. saprophyticus (strain ATCC 15305 / DSM 20229 / NCIMB 8711 / NCTC 7292 / S-41).